A 122-amino-acid chain; its full sequence is Defensin-like protein 181 (122 aa).

Residues 1 to 26 (MERIPSLASLVSLLIIFATVVNQTRA) form the signal peptide. Disulfide bonds link C29–C70, C36–C55, C39–C64, C43–C66, C76–C122, C87–C107, C92–C116, and C96–C118.

This sequence belongs to the DEFL family.

The protein localises to the secreted. Confers broad-spectrum resistance to pathogens. In Arabidopsis thaliana (Mouse-ear cress), this protein is Defensin-like protein 181 (PDF3.1).